Consider the following 3255-residue polypeptide: Genome polyprotein (3255 aa).

Positions 292-437 (VMNQQTLMAF…HSITHRMVQY (146 aa)) constitute a Peptidase S30 domain. Active-site for P1 proteinase activity residues include His-345, Asp-354, and Ser-388. The short motif at 489-492 (KITC) is the Involved in interaction with stylet and aphid transmission element. Positions 747 to 749 (PTK) match the Involved in virions binding and aphid transmission motif. The Peptidase C6 domain maps to 773 to 895 (MFVTKDGYCY…ESEMQHYRVG (123 aa)). Residues Cys-781 and His-854 each act as for helper component proteinase activity in the active site. A Helicase ATP-binding domain is found at 1397-1549 (EIAHNEYRDI…PMHMVDIATE (153 aa)). Position 1410–1417 (1410–1417 (GGVGSGKS)) interacts with ATP. The DECH box motif lies at 1499–1502 (DECH). In terms of domain architecture, Helicase C-terminal spans 1568–1727 (DATKKGDNIL…GLPVMTSNVS (160 aa)). A Nuclear localization signal motif is present at residues 2062–2069 (EKGKKSGK). Residue Tyr-2084 is modified to O-(5'-phospho-RNA)-tyrosine. The region spanning 2215 to 2433 (SKTLFRGLRD…MVWGGINLIN (219 aa)) is the Peptidase C4 domain. Active-site for nuclear inclusion protein A activity residues include His-2260, Asp-2295, and Cys-2365. The region spanning 2699–2823 (WVYCDADGSQ…AIKPEHESLL (125 aa)) is the RdRp catalytic domain. Positions 2980-3028 (AKLDAGQGSKTDDKQKNSADPKDNIITEKGSGSGQMKKDDDINAGLHGK) are disordered. Basic and acidic residues predominate over residues 2989–3005 (KTDDKQKNSADPKDNII). Thr-3237 carries the phosphothreonine modification.

The protein belongs to the potyviridae genome polyprotein family. In terms of assembly, interacts with host eIF4E protein (via cap-binding region); this interaction mediates the translation of the VPg-viral RNA conjugates. Part of a complex that comprises VPg, RNA, host EIF4E and EIF4G; this interaction mediates the translation of the VPg-viral RNA conjugates. In terms of processing, VPg is uridylylated by the polymerase and is covalently attached to the 5'-end of the genomic RNA. This uridylylated form acts as a nucleotide-peptide primer for the polymerase. Potyviral RNA is expressed as two polyproteins which undergo post-translational proteolytic processing. Genome polyprotein is processed by NIa-pro, P1 and HC-pro proteinases resulting in the production of at least ten individual proteins. P3N-PIPO polyprotein is cleaved by P1 and HC-pro proteinases resulting in the production of three individual proteins. The P1 proteinase and the HC-pro cleave only their respective C-termini autocatalytically. 6K1 is essential for proper proteolytic separation of P3 from CI.

The protein resides in the host cytoplasmic vesicle. Its subcellular location is the host nucleus. It is found in the virion. It catalyses the reaction RNA(n) + a ribonucleoside 5'-triphosphate = RNA(n+1) + diphosphate. It carries out the reaction Hydrolyzes glutaminyl bonds, and activity is further restricted by preferences for the amino acids in P6 - P1' that vary with the species of potyvirus, e.g. Glu-Xaa-Xaa-Tyr-Xaa-Gln-|-(Ser or Gly) for the enzyme from tobacco etch virus. The natural substrate is the viral polyprotein, but other proteins and oligopeptides containing the appropriate consensus sequence are also cleaved.. The enzyme catalyses Hydrolyzes a Gly-|-Gly bond at its own C-terminus, commonly in the sequence -Tyr-Xaa-Val-Gly-|-Gly, in the processing of the potyviral polyprotein.. Required for aphid transmission and also has proteolytic activity. Only cleaves a Gly-Gly dipeptide at its own C-terminus. Interacts with virions and aphid stylets. Acts as a suppressor of RNA-mediated gene silencing, also known as post-transcriptional gene silencing (PTGS), a mechanism of plant viral defense that limits the accumulation of viral RNAs. May have RNA-binding activity. In terms of biological role, has helicase activity. It may be involved in replication. Its function is as follows. Indispensable for virus replication. Reduces the abundance of host transcripts related to jasmonic acid biosynthesis therefore altering the host defenses. In order to increase its own stability, decreases host protein degradation pathways. Functionally, indispensable for virus replication. Mediates the cap-independent, EIF4E-dependent translation of viral genomic RNAs. Binds to the cap-binding site of host EIF4E and thus interferes with the host EIF4E-dependent mRNA export and translation. VPg-RNA directly binds EIF4E and is a template for transcription. Also forms trimeric complexes with EIF4E-EIF4G, which are templates for translation. In terms of biological role, has RNA-binding and proteolytic activities. Its function is as follows. An RNA-dependent RNA polymerase that plays an essential role in the virus replication. Functionally, involved in aphid transmission, cell-to-cell and systemis movement, encapsidation of the viral RNA and in the regulation of viral RNA amplification. The chain is Genome polyprotein from Lettuce mosaic virus (strain 0 / isolate French) (LMV).